A 327-amino-acid polypeptide reads, in one-letter code: Methionyl-tRNA formyltransferase (327 aa).

121–124 (SLLP) provides a ligand contact to (6S)-5,6,7,8-tetrahydrofolate.

Belongs to the Fmt family.

It catalyses the reaction L-methionyl-tRNA(fMet) + (6R)-10-formyltetrahydrofolate = N-formyl-L-methionyl-tRNA(fMet) + (6S)-5,6,7,8-tetrahydrofolate + H(+). Attaches a formyl group to the free amino group of methionyl-tRNA(fMet). The formyl group appears to play a dual role in the initiator identity of N-formylmethionyl-tRNA by promoting its recognition by IF2 and preventing the misappropriation of this tRNA by the elongation apparatus. The polypeptide is Methionyl-tRNA formyltransferase (Burkholderia ambifaria (strain MC40-6)).